A 124-amino-acid chain; its full sequence is Small ribosomal subunit protein uS12 (124 aa).

Positions 1-32 are disordered; the sequence is MPTIQQLVRKGRQDKVSKNKTPALKGSPQRRG. At Asp-89 the chain carries 3-methylthioaspartic acid.

Belongs to the universal ribosomal protein uS12 family. As to quaternary structure, part of the 30S ribosomal subunit. Contacts proteins S8 and S17. May interact with IF1 in the 30S initiation complex.

In terms of biological role, with S4 and S5 plays an important role in translational accuracy. Interacts with and stabilizes bases of the 16S rRNA that are involved in tRNA selection in the A site and with the mRNA backbone. Located at the interface of the 30S and 50S subunits, it traverses the body of the 30S subunit contacting proteins on the other side and probably holding the rRNA structure together. The combined cluster of proteins S8, S12 and S17 appears to hold together the shoulder and platform of the 30S subunit. In Nocardioides sp. (strain ATCC BAA-499 / JS614), this protein is Small ribosomal subunit protein uS12.